The chain runs to 134 residues: Profilin (134 aa).

The protein belongs to the profilin family. In terms of assembly, occurs in many kinds of cells as a complex with monomeric actin in a 1:1 ratio.

Its subcellular location is the cytoplasm. It localises to the cytoskeleton. Functionally, binds to actin and affects the structure of the cytoskeleton. At high concentrations, profilin prevents the polymerization of actin, whereas it enhances it at low concentrations. By binding to PIP2, it inhibits the formation of IP3 and DG. The protein is Profilin of Brassica napus (Rape).